Consider the following 341-residue polypeptide: DNA-directed RNA polymerase subunit alpha (341 aa).

Residues 1 to 233 (MIQDEVPVSA…DLFLPFLHTE (233 aa)) form an alpha N-terminal domain (alpha-NTD) region. Residues 262–341 (DRMAKEVAFK…NLPRNKFSID (80 aa)) are alpha C-terminal domain (alpha-CTD).

Belongs to the RNA polymerase alpha chain family. In plastids the minimal PEP RNA polymerase catalytic core is composed of four subunits: alpha, beta, beta', and beta''. When a (nuclear-encoded) sigma factor is associated with the core the holoenzyme is formed, which can initiate transcription.

Its subcellular location is the plastid. The protein localises to the chloroplast. The enzyme catalyses RNA(n) + a ribonucleoside 5'-triphosphate = RNA(n+1) + diphosphate. Its function is as follows. DNA-dependent RNA polymerase catalyzes the transcription of DNA into RNA using the four ribonucleoside triphosphates as substrates. The chain is DNA-directed RNA polymerase subunit alpha from Angiopteris evecta (Mule's foot fern).